Reading from the N-terminus, the 545-residue chain is tRNA-2-methylthio-N(6)-dimethylallyladenosine synthase (545 aa).

The disordered stretch occupies residues 1–32 (MSSASPLARCCDEATPSAGPRAAQPPYHGPVT). The MTTase N-terminal domain occupies 58–174 (RTYQVRTYGC…LPTLLERARH (117 aa)). [4Fe-4S] cluster contacts are provided by Cys-67, Cys-103, Cys-137, Cys-211, Cys-215, and Cys-218. Positions 197 to 433 (RESAYAAWVS…IALQEQISLE (237 aa)) constitute a Radical SAM core domain. The TRAM domain maps to 436–504 (RALVGQAVEV…PHHLIADAGV (69 aa)).

It belongs to the methylthiotransferase family. MiaB subfamily. As to quaternary structure, monomer. [4Fe-4S] cluster is required as a cofactor.

It localises to the cytoplasm. It catalyses the reaction N(6)-dimethylallyladenosine(37) in tRNA + (sulfur carrier)-SH + AH2 + 2 S-adenosyl-L-methionine = 2-methylsulfanyl-N(6)-dimethylallyladenosine(37) in tRNA + (sulfur carrier)-H + 5'-deoxyadenosine + L-methionine + A + S-adenosyl-L-homocysteine + 2 H(+). Its function is as follows. Catalyzes the methylthiolation of N6-(dimethylallyl)adenosine (i(6)A), leading to the formation of 2-methylthio-N6-(dimethylallyl)adenosine (ms(2)i(6)A) at position 37 in tRNAs that read codons beginning with uridine. This chain is tRNA-2-methylthio-N(6)-dimethylallyladenosine synthase, found in Mycobacterium bovis (strain BCG / Pasteur 1173P2).